The chain runs to 172 residues: Small ribosomal subunit protein uS5 (172 aa).

The S5 DRBM domain maps to 17–80 (LREKMISVNR…EQARRNMFKV (64 aa)).

It belongs to the universal ribosomal protein uS5 family. Part of the 30S ribosomal subunit. Contacts proteins S4 and S8.

Functionally, with S4 and S12 plays an important role in translational accuracy. Located at the back of the 30S subunit body where it stabilizes the conformation of the head with respect to the body. This chain is Small ribosomal subunit protein uS5, found in Paraburkholderia phytofirmans (strain DSM 17436 / LMG 22146 / PsJN) (Burkholderia phytofirmans).